We begin with the raw amino-acid sequence, 348 residues long: Calcium homeostasis modulator protein 1 (348 aa).

Topologically, residues 1–20 (MDKFRMIFQFLQSNQESFMN) are cytoplasmic. The central pore stretch occupies residues 9 to 36 (QFLQSNQESFMNGICGIMALASAQMYSA). A helical membrane pass occupies residues 21-36 (GICGIMALASAQMYSA). Over 37 to 48 (FDFNCPCLPGYN) the chain is Extracellular. Cystine bridges form between cysteine 41–cysteine 126 and cysteine 43–cysteine 160. The helical transmembrane segment at 49–71 (VVYSLGILLTPPLVLFLLGLVMN) threads the bilayer. Residues 62–69 (VLFLLGLV) form a phospholipid-binding region. Topologically, residues 72–98 (NNISMLAEEWKRPAGRRAKDPAVLRYM) are cytoplasmic. The chain crosses the membrane as a helical span at residues 99-124 (FCSMAQRALIAPVVWVAVTLLDGKCF). Cysteine 100 carries S-palmitoyl cysteine lipidation. A phospholipid-binding region spans residues 104-116 (QRALIAPVVWVAV). The Extracellular segment spans residues 125–179 (LCAFCTAVPVATLGNGSLVPGLPAPELARLLARVPCPEIYDGNWLLAREVAVRYL). Asparagine 139 is a glycosylation site (N-linked (GlcNAc...) asparagine). The helical transmembrane segment at 180–205 (RCISQALGWSFVLLTTLLAFVVRSVR) threads the bilayer. Positions 191 to 201 (VLLTTLLAFVV) are phospholipid-binding. At 206-348 (PCFTQVAFLK…KEVATYFSKV (143 aa)) the chain is on the cytoplasmic side. A lipid anchor (S-palmitoyl cysteine) is attached at cysteine 207. The interval 324–348 (LMSNGWAGGEPRPPRKEVATYFSKV) is disordered.

Belongs to the CALHM family. In terms of assembly, oligomerizes to form hexamers and octamers. Does not form gap junctions. Associates with CALHM3 as a pore-forming subunit in a hetero-hexameric channel complex. In terms of processing, N-glycosylated. Assembly with CALHM3 is associated with N-glycan remodeling and formation of hybrid complex- and high mannose-type glycochains. This N-glycan processing regulates channel trafficking and gating kinetics. Post-translationally, palmitoylated by ZDHHC3, ZDHHC20 and possibly ZDHHC7. Palmitoylation regulates voltage-dependent gating of the channel by shifting it toward more depolarized potentials. As to expression, specifically expressed in type II taste bud cells (at protein level). Not expressed in brain.

It is found in the cell membrane. It localises to the endoplasmic reticulum membrane. The protein resides in the basolateral cell membrane. It carries out the reaction ATP(in) = ATP(out). It catalyses the reaction Ca(2+)(in) = Ca(2+)(out). The enzyme catalyses Mg(2+)(in) = Mg(2+)(out). The catalysed reaction is Na(+)(in) = Na(+)(out). It carries out the reaction K(+)(in) = K(+)(out). It catalyses the reaction Li(+)(in) = Li(+)(out). The enzyme catalyses Rb(+)(in) = Rb(+)(out). The catalysed reaction is Cs(+)(in) = Cs(+)(out). It carries out the reaction chloride(in) = chloride(out). Its activity is regulated as follows. Regulated by membrane voltage and extracellular Ca(2+). Inhibited by Gd(3+), ruthenium red, and Zn(2+) and partially inhibited by 2-aminoethoxydiphenyl borate. In terms of biological role, pore-forming subunit of gustatory voltage-gated ion channels required for sensory perception of sweet, bitter and umami tastes. With CALHM3 forms a fast-activating voltage-gated ATP-release channel in type II taste bud cells, ATP acting as a neurotransmitter to activate afferent neural gustatory pathways. Acts both as a voltage-gated and calcium-activated ion channel: mediates neuronal excitability in response to membrane depolarization and low extracellular Ca(2+) concentration. Has poor ion selectivity and forms a wide pore (around 14 Angstroms) that mediates permeation of small ions including Ca(2+), Na(+), K(+) and Cl(-), as well as larger ions such as ATP(4-). Mediates Ca(2+) influx and downstream activation of the ERK1 and ERK2 cascade in neurons. Triggers endoplasmic reticulum stress by reducing the calcium content of the endoplasmic reticulum. May indirectly control amyloid precursor protein (APP) proteolysis and aggregated amyloid-beta (Abeta) peptides levels in a Ca(2+) dependent manner. This chain is Calcium homeostasis modulator protein 1, found in Mus musculus (Mouse).